The following is a 152-amino-acid chain: Small ribosomal subunit protein uS15 (152 aa).

A compositionally biased stretch (basic residues) spans 1-11 (MAKMHTKRKGK). Residues 1-23 (MAKMHTKRKGKSSSTRPIRTDPP) are disordered.

It belongs to the universal ribosomal protein uS15 family. As to quaternary structure, part of the 30S ribosomal subunit.

This Methanosarcina acetivorans (strain ATCC 35395 / DSM 2834 / JCM 12185 / C2A) protein is Small ribosomal subunit protein uS15.